The chain runs to 205 residues: Pyridoxal 5'-phosphate synthase subunit PdxT (205 aa).

52–54 (GES) lines the L-glutamine pocket. Catalysis depends on Cys84, which acts as the Nucleophile. L-glutamine is bound by residues Arg116 and 145–146 (IR). Residues His185 and Glu187 each act as charge relay system in the active site.

The protein belongs to the glutaminase PdxT/SNO family. In terms of assembly, in the presence of PdxS, forms a dodecamer of heterodimers. Only shows activity in the heterodimer.

It carries out the reaction aldehydo-D-ribose 5-phosphate + D-glyceraldehyde 3-phosphate + L-glutamine = pyridoxal 5'-phosphate + L-glutamate + phosphate + 3 H2O + H(+). The catalysed reaction is L-glutamine + H2O = L-glutamate + NH4(+). Its pathway is cofactor biosynthesis; pyridoxal 5'-phosphate biosynthesis. Catalyzes the hydrolysis of glutamine to glutamate and ammonia as part of the biosynthesis of pyridoxal 5'-phosphate. The resulting ammonia molecule is channeled to the active site of PdxS. The chain is Pyridoxal 5'-phosphate synthase subunit PdxT from Staphylothermus marinus (strain ATCC 43588 / DSM 3639 / JCM 9404 / F1).